We begin with the raw amino-acid sequence, 277 residues long: Diaminopimelate epimerase (277 aa).

Positions 13, 46, and 66 each coordinate substrate. C75 functions as the Proton donor in the catalytic mechanism. Substrate is bound by residues 76 to 77 (GN), N160, N193, and 211 to 212 (ER). The active-site Proton acceptor is the C220. Residue 221-222 (GT) coordinates substrate.

It belongs to the diaminopimelate epimerase family. In terms of assembly, homodimer.

It is found in the cytoplasm. It carries out the reaction (2S,6S)-2,6-diaminopimelate = meso-2,6-diaminopimelate. It participates in amino-acid biosynthesis; L-lysine biosynthesis via DAP pathway; DL-2,6-diaminopimelate from LL-2,6-diaminopimelate: step 1/1. Its function is as follows. Catalyzes the stereoinversion of LL-2,6-diaminopimelate (L,L-DAP) to meso-diaminopimelate (meso-DAP), a precursor of L-lysine and an essential component of the bacterial peptidoglycan. The protein is Diaminopimelate epimerase of Saccharophagus degradans (strain 2-40 / ATCC 43961 / DSM 17024).